A 258-amino-acid polypeptide reads, in one-letter code: uncharacterized protein (258 aa).

7 helical membrane passes run 8–28 (VFLA…IVWF), 38–58 (VFFI…GGVH), 70–90 (EAMQ…GIFE), 121–141 (LEAI…AFAI), 176–196 (LGGI…LLVL), 204–224 (PLFL…AVLY), and 231–251 (HAAA…YWIV).

The protein resides in the cell membrane. This is an uncharacterized protein from Bacillus subtilis (strain 168).